The primary structure comprises 536 residues: GMP synthase [glutamine-hydrolyzing] (536 aa).

The Glutamine amidotransferase type-1 domain occupies 4 to 206 (KILILDFGSQ…VLDICGARAD (203 aa)). Cys-85 (nucleophile) is an active-site residue. Active-site residues include His-180 and Glu-182. The region spanning 207 to 404 (WIMGDYISEA…LGLPYHMVYR (198 aa)) is the GMPS ATP-PPase domain. 234-240 (SGGVDSS) provides a ligand contact to ATP.

Homodimer.

The catalysed reaction is XMP + L-glutamine + ATP + H2O = GMP + L-glutamate + AMP + diphosphate + 2 H(+). The protein operates within purine metabolism; GMP biosynthesis; GMP from XMP (L-Gln route): step 1/1. In terms of biological role, catalyzes the synthesis of GMP from XMP. This Albidiferax ferrireducens (strain ATCC BAA-621 / DSM 15236 / T118) (Rhodoferax ferrireducens) protein is GMP synthase [glutamine-hydrolyzing].